Here is a 563-residue protein sequence, read N- to C-terminus: Arginine--tRNA ligase (563 aa).

The 'HIGH' region signature appears at 121-131 (PNIAKPFSIGH).

It belongs to the class-I aminoacyl-tRNA synthetase family. Monomer.

Its subcellular location is the cytoplasm. It carries out the reaction tRNA(Arg) + L-arginine + ATP = L-arginyl-tRNA(Arg) + AMP + diphosphate. This Streptococcus pyogenes serotype M12 (strain MGAS2096) protein is Arginine--tRNA ligase.